The following is an 877-amino-acid chain: Alanine--tRNA ligase (877 aa).

The Zn(2+) site is built by His567, His571, Cys669, and His673.

This sequence belongs to the class-II aminoacyl-tRNA synthetase family. The cofactor is Zn(2+).

It is found in the cytoplasm. The catalysed reaction is tRNA(Ala) + L-alanine + ATP = L-alanyl-tRNA(Ala) + AMP + diphosphate. Functionally, catalyzes the attachment of alanine to tRNA(Ala) in a two-step reaction: alanine is first activated by ATP to form Ala-AMP and then transferred to the acceptor end of tRNA(Ala). Also edits incorrectly charged Ser-tRNA(Ala) and Gly-tRNA(Ala) via its editing domain. In Rickettsia bellii (strain RML369-C), this protein is Alanine--tRNA ligase.